Here is a 131-residue protein sequence, read N- to C-terminus: Ribonuclease P protein component (131 aa).

The protein belongs to the RnpA family. As to quaternary structure, consists of a catalytic RNA component (M1 or rnpB) and a protein subunit.

The catalysed reaction is Endonucleolytic cleavage of RNA, removing 5'-extranucleotides from tRNA precursor.. In terms of biological role, RNaseP catalyzes the removal of the 5'-leader sequence from pre-tRNA to produce the mature 5'-terminus. It can also cleave other RNA substrates such as 4.5S RNA. The protein component plays an auxiliary but essential role in vivo by binding to the 5'-leader sequence and broadening the substrate specificity of the ribozyme. This Synechococcus sp. (strain WH7803) protein is Ribonuclease P protein component.